The following is a 676-amino-acid chain: Beta-taxilin (676 aa).

Disordered stretches follow at residues 1–55 (MEND…DISE) and 71–131 (AASL…EQKL). Composition is skewed to polar residues over residues 8–25 (EKQQ…QGQS) and 34–45 (QPLSPTNQTSAQ). Basic and acidic residues predominate over residues 75–92 (VEKEGTTAETDKPEKEDV). Residues 93-105 (GSMEDAECEDVNE) show a composition bias toward acidic residues. Basic and acidic residues predominate over residues 106–131 (ESEKDKPAPGDASRAKEPSASKEQKL). Residues 157 to 461 (EEKLDLLFKK…LYRKIKQAQL (305 aa)) are a coiled coil. The interval 464-486 (EVNGNDILEEDDDANTNPSSSEQ) is disordered.

This sequence belongs to the taxilin family. In terms of tissue distribution, specifically expressed in skeletal and cardiac muscle.

Its subcellular location is the cytoplasm. Functionally, promotes neurite-outgrowth. May be involved in intracellular vesicle traffic. The chain is Beta-taxilin (TXLNB) from Gallus gallus (Chicken).